Reading from the N-terminus, the 572-residue chain is Glutathione hydrolase 1 (572 aa).

A signal peptide spans 1–22 (MSLVRTVTIVLFIIAFLQNAAA). Arg99 is an L-glutamate binding site. Asn171 and Asn222 each carry an N-linked (GlcNAc...) asparagine glycan. Thr368 acts as the Nucleophile in catalysis. Residues Thr386, Asn388, Glu407, Asp410, 440 to 441 (SS), and 461 to 462 (GG) contribute to the L-glutamate site. An N-linked (GlcNAc...) asparagine glycan is attached at Asn505. The disordered stretch occupies residues 552–572 (GGRSELVAVSDPRKGGFPSGY).

This sequence belongs to the gamma-glutamyltransferase family. Expressed in embryo, roots and leaves. In mature plants, expression is restricted to vascular tissues of roots, leaves, flowers and siliques.

It localises to the secreted. Its subcellular location is the extracellular space. The protein resides in the apoplast. It carries out the reaction an N-terminal (5-L-glutamyl)-[peptide] + an alpha-amino acid = 5-L-glutamyl amino acid + an N-terminal L-alpha-aminoacyl-[peptide]. The enzyme catalyses glutathione + H2O = L-cysteinylglycine + L-glutamate. The catalysed reaction is an S-substituted glutathione + H2O = an S-substituted L-cysteinylglycine + L-glutamate. The protein operates within sulfur metabolism; glutathione metabolism. May play a role in preventing oxidative stress by metabolizing extracellular oxidized glutathione (GSSG). This is Glutathione hydrolase 1 (GGT1) from Arabidopsis thaliana (Mouse-ear cress).